The chain runs to 312 residues: Ribosomal protein L11 methyltransferase (312 aa).

Positions 160, 181, 203, and 246 each coordinate S-adenosyl-L-methionine.

This sequence belongs to the methyltransferase superfamily. PrmA family.

The protein localises to the cytoplasm. It catalyses the reaction L-lysyl-[protein] + 3 S-adenosyl-L-methionine = N(6),N(6),N(6)-trimethyl-L-lysyl-[protein] + 3 S-adenosyl-L-homocysteine + 3 H(+). In terms of biological role, methylates ribosomal protein L11. The sequence is that of Ribosomal protein L11 methyltransferase from Staphylococcus haemolyticus (strain JCSC1435).